The sequence spans 213 residues: MKLLLFITIAYLLGSIPTGLWIGQYFYHINLREHGSGNTGTTNTFRILGVKAGTATLAIDMFKGTLSILLPIIFGMTSISSIAIGFFAVLGHTFPIFANFKGGKAVATSAGVLLGFAPLYLFFLASIFVLVLYLFSMISLASVVSAIVGVLSVLTFPAIHFLLPNYDYFLTFIVILLAFIIIIRHKDNISRIKHHTENLIPWGLNLSKQVPKK.

Transmembrane regions (helical) follow at residues 3-23 (LLLFITIAYLLGSIPTGLWIG), 68-88 (ILLPIIFGMTSISSIAIGFFA), 112-132 (VLLGFAPLYLFFLASIFVLVL), 134-154 (LFSMISLASVVSAIVGVLSVL), and 163-183 (LPNYDYFLTFIVILLAFIIII).

This sequence belongs to the PlsY family. Probably interacts with PlsX.

Its subcellular location is the cell membrane. It catalyses the reaction an acyl phosphate + sn-glycerol 3-phosphate = a 1-acyl-sn-glycero-3-phosphate + phosphate. It participates in lipid metabolism; phospholipid metabolism. Functionally, catalyzes the transfer of an acyl group from acyl-phosphate (acyl-PO(4)) to glycerol-3-phosphate (G3P) to form lysophosphatidic acid (LPA). This enzyme utilizes acyl-phosphate as fatty acyl donor, but not acyl-CoA or acyl-ACP. In Streptococcus pyogenes serotype M28 (strain MGAS6180), this protein is Glycerol-3-phosphate acyltransferase.